We begin with the raw amino-acid sequence, 253 residues long: MSEQKTIRFIITRQDTADSTPYDEEFEIPYRPNLNVISALMEIRRNPVNVKGEKTTPVTWDMNCLEEVCGACSMVINGKPRQSCTALIDQLEQPIRLKPMKTFPVVRDLQVDRSRMFDSLKKVKAWIPIDGTYDLGPGPRMPEKRRQWAYELSKCMTCGVCLEACPNVNSKSKFMGPAPMSQVRLFNAHPTGAMNKSERLEALMDEGGLADCGNSQNCVQSCPKGIPLTTSIAALNRDTNLQAFRNFFGSDRV.

[2Fe-2S] cluster is bound by residues cysteine 64, cysteine 69, and cysteine 84. Positions 146–174 (RQWAYELSKCMTCGVCLEACPNVNSKSKF) constitute a 4Fe-4S ferredoxin-type domain. [4Fe-4S] cluster contacts are provided by cysteine 155, cysteine 158, and cysteine 161. The [3Fe-4S] cluster site is built by cysteine 165, cysteine 212, and cysteine 218. Cysteine 222 is a [4Fe-4S] cluster binding site.

It belongs to the succinate dehydrogenase/fumarate reductase iron-sulfur protein family. As to quaternary structure, in B.subtilis succinate dehydrogenase forms part of an enzyme complex containing three subunits: a flavoprotein, an iron-sulfur protein and cytochrome b-558. [2Fe-2S] cluster is required as a cofactor. Requires [3Fe-4S] cluster as cofactor. [4Fe-4S] cluster serves as cofactor.

It catalyses the reaction a quinone + succinate = fumarate + a quinol. It functions in the pathway carbohydrate metabolism; tricarboxylic acid cycle; fumarate from succinate (bacterial route): step 1/1. The polypeptide is Succinate dehydrogenase iron-sulfur subunit (sdhB) (Bacillus subtilis (strain 168)).